The primary structure comprises 250 residues: 2,3-bisphosphoglycerate-dependent phosphoglycerate mutase (250 aa).

Residues 8 to 15 (RHGQSAWN), 21 to 22 (TG), arginine 60, 87 to 90 (ERHY), lysine 98, 114 to 115 (RR), and 183 to 184 (GN) contribute to the substrate site. Residue histidine 9 is the Tele-phosphohistidine intermediate of the active site. Glutamate 87 (proton donor/acceptor) is an active-site residue.

The protein belongs to the phosphoglycerate mutase family. BPG-dependent PGAM subfamily. As to quaternary structure, homodimer.

The enzyme catalyses (2R)-2-phosphoglycerate = (2R)-3-phosphoglycerate. It functions in the pathway carbohydrate degradation; glycolysis; pyruvate from D-glyceraldehyde 3-phosphate: step 3/5. Functionally, catalyzes the interconversion of 2-phosphoglycerate and 3-phosphoglycerate. The sequence is that of 2,3-bisphosphoglycerate-dependent phosphoglycerate mutase from Nitratidesulfovibrio vulgaris (strain ATCC 29579 / DSM 644 / CCUG 34227 / NCIMB 8303 / VKM B-1760 / Hildenborough) (Desulfovibrio vulgaris).